The primary structure comprises 157 residues: Protein Smg homolog (157 aa).

It belongs to the Smg family.

The sequence is that of Protein Smg homolog from Xanthomonas oryzae pv. oryzae (strain MAFF 311018).